The chain runs to 316 residues: HPr kinase/phosphorylase (316 aa).

Active-site residues include His-146 and Lys-167. 161–168 serves as a coordination point for ATP; the sequence is GESGLGKS. Mg(2+) is bound at residue Ser-168. Residue Asp-185 is the Proton acceptor; for phosphorylation activity. Proton donor; for dephosphorylation activity of the active site. Positions 209–218 are important for the catalytic mechanism of both phosphorylation and dephosphorylation; sequence LEVRGIGLLD. Glu-210 serves as a coordination point for Mg(2+). Residue Arg-252 is part of the active site. An important for the catalytic mechanism of dephosphorylation region spans residues 273–278; it reads QVEAGR.

The protein belongs to the HPrK/P family. Homohexamer. It depends on Mg(2+) as a cofactor.

The enzyme catalyses [HPr protein]-L-serine + ATP = [HPr protein]-O-phospho-L-serine + ADP + H(+). It carries out the reaction [HPr protein]-O-phospho-L-serine + phosphate + H(+) = [HPr protein]-L-serine + diphosphate. Functionally, catalyzes the ATP- as well as the pyrophosphate-dependent phosphorylation of a specific serine residue in HPr, a phosphocarrier protein of the phosphoenolpyruvate-dependent sugar phosphotransferase system (PTS). HprK/P also catalyzes the pyrophosphate-producing, inorganic phosphate-dependent dephosphorylation (phosphorolysis) of seryl-phosphorylated HPr (P-Ser-HPr). The polypeptide is HPr kinase/phosphorylase (Polaromonas naphthalenivorans (strain CJ2)).